We begin with the raw amino-acid sequence, 354 residues long: Glycerol-3-phosphate dehydrogenase [NAD(P)+] (354 aa).

NADPH-binding residues include serine 27, phenylalanine 28, arginine 48, and lysine 121. The sn-glycerol 3-phosphate site is built by lysine 121 and glycine 149. Residue alanine 153 coordinates NADPH. Residues lysine 204, aspartate 257, serine 267, arginine 268, and asparagine 269 each coordinate sn-glycerol 3-phosphate. Lysine 204 serves as the catalytic Proton acceptor. Position 268 (arginine 268) interacts with NADPH. NADPH contacts are provided by valine 292 and glutamate 294.

This sequence belongs to the NAD-dependent glycerol-3-phosphate dehydrogenase family.

Its subcellular location is the cytoplasm. The enzyme catalyses sn-glycerol 3-phosphate + NAD(+) = dihydroxyacetone phosphate + NADH + H(+). It carries out the reaction sn-glycerol 3-phosphate + NADP(+) = dihydroxyacetone phosphate + NADPH + H(+). It functions in the pathway membrane lipid metabolism; glycerophospholipid metabolism. In terms of biological role, catalyzes the reduction of the glycolytic intermediate dihydroxyacetone phosphate (DHAP) to sn-glycerol 3-phosphate (G3P), the key precursor for phospholipid synthesis. This chain is Glycerol-3-phosphate dehydrogenase [NAD(P)+], found in Pseudomonas fluorescens (strain Pf0-1).